Here is a 183-residue protein sequence, read N- to C-terminus: Large ribosomal subunit protein uL6 (183 aa).

It belongs to the universal ribosomal protein uL6 family. As to quaternary structure, part of the 50S ribosomal subunit.

This protein binds to the 23S rRNA, and is important in its secondary structure. It is located near the subunit interface in the base of the L7/L12 stalk, and near the tRNA binding site of the peptidyltransferase center. In Chlamydia muridarum (strain MoPn / Nigg), this protein is Large ribosomal subunit protein uL6.